Consider the following 273-residue polypeptide: Ribosomal RNA small subunit methyltransferase A (273 aa).

The S-adenosyl-L-methionine site is built by Asn18, Leu20, Gly45, Glu66, Asp91, and Asn113.

This sequence belongs to the class I-like SAM-binding methyltransferase superfamily. rRNA adenine N(6)-methyltransferase family. RsmA subfamily.

It is found in the cytoplasm. The catalysed reaction is adenosine(1518)/adenosine(1519) in 16S rRNA + 4 S-adenosyl-L-methionine = N(6)-dimethyladenosine(1518)/N(6)-dimethyladenosine(1519) in 16S rRNA + 4 S-adenosyl-L-homocysteine + 4 H(+). Specifically dimethylates two adjacent adenosines (A1518 and A1519) in the loop of a conserved hairpin near the 3'-end of 16S rRNA in the 30S particle. May play a critical role in biogenesis of 30S subunits. This is Ribosomal RNA small subunit methyltransferase A from Erwinia tasmaniensis (strain DSM 17950 / CFBP 7177 / CIP 109463 / NCPPB 4357 / Et1/99).